The primary structure comprises 283 residues: ATP synthase gamma chain (283 aa).

Belongs to the ATPase gamma chain family. In terms of assembly, F-type ATPases have 2 components, CF(1) - the catalytic core - and CF(0) - the membrane proton channel. CF(1) has five subunits: alpha(3), beta(3), gamma(1), delta(1), epsilon(1). CF(0) has three main subunits: a, b and c.

It is found in the cell membrane. In terms of biological role, produces ATP from ADP in the presence of a proton gradient across the membrane. The gamma chain is believed to be important in regulating ATPase activity and the flow of protons through the CF(0) complex. The chain is ATP synthase gamma chain from Clostridium perfringens (strain ATCC 13124 / DSM 756 / JCM 1290 / NCIMB 6125 / NCTC 8237 / Type A).